The sequence spans 559 residues: Potassium-transporting ATPase potassium-binding subunit (559 aa).

A run of 12 helical transmembrane segments spans residues 5–25 (GFLLLASYLLVLLVLARPLGT), 63–83 (LLAILLFNALGGLALFALLML), 131–151 (VGLTVQNFLSAATGIAVVFAL), 173–193 (ITLWLLLPLSLLVALFFIQQG), 254–274 (VQMLAIFLIPAALCFAFGEVV), 282–302 (AILWAMTLIFILCVAVVMWAE), 327–347 (FGILASSLFAVITTAASCGAV), 356–376 (ALGGMVPMWLMQIGEVVFGGV), 379–399 (GLYGMLLFVMLAVFIAGLMVG), 416–436 (MIALAILVTPTLVLLGTALAM), 483–503 (LLLAFCMLVGRFAVIIPVMAI), and 525–545 (ALFIGLLIGTVLLVGALTFIP).

This sequence belongs to the KdpA family. In terms of assembly, the system is composed of three essential subunits: KdpA, KdpB and KdpC.

The protein localises to the cell inner membrane. Its function is as follows. Part of the high-affinity ATP-driven potassium transport (or Kdp) system, which catalyzes the hydrolysis of ATP coupled with the electrogenic transport of potassium into the cytoplasm. This subunit binds the periplasmic potassium ions and delivers the ions to the membrane domain of KdpB through an intramembrane tunnel. This is Potassium-transporting ATPase potassium-binding subunit from Klebsiella pneumoniae (strain 342).